Here is a 1081-residue protein sequence, read N- to C-terminus: Probable sucrose-phosphate synthase 2 (1081 aa).

3 disordered regions span residues 116–152, 239–267, and 760–780; these read EQGRKDVTEDMSEDLSEGEKGDVMGETPVALDSPRGN, EPTEMLSSSSTTAGEAHEPEEEEEEEDLG, and IKRQDSGPAQREAEGKAGDVP. Acidic residues predominate over residues 256–267; the sequence is EPEEEEEEEDLG.

It belongs to the glycosyltransferase 1 family. As to quaternary structure, homodimer or homotetramer.

It carries out the reaction beta-D-fructose 6-phosphate + UDP-alpha-D-glucose = sucrose 6(F)-phosphate + UDP + H(+). It functions in the pathway glycan biosynthesis; sucrose biosynthesis; sucrose from D-fructose 6-phosphate and UDP-alpha-D-glucose: step 1/2. With respect to regulation, activity is regulated by phosphorylation and moderated by concentration of metabolites and light. Plays a role in photosynthetic sucrose synthesis by catalyzing the rate-limiting step of sucrose biosynthesis from UDP-glucose and fructose- 6-phosphate. Involved in the regulation of carbon partitioning in the leaves of plants. May regulate the synthesis of sucrose and therefore play a major role as a limiting factor in the export of photoassimilates out of the leaf. Plays a role for sucrose availability that is essential for plant growth and fiber elongation. The sequence is that of Probable sucrose-phosphate synthase 2 (SPS2) from Craterostigma plantagineum (Blue gem).